Here is a 428-residue protein sequence, read N- to C-terminus: G2/mitotic-specific cyclin-1 (428 aa).

A disordered region spans residues 1–22 (MKFSEEKNVSNNPTNFEGGLDS).

Belongs to the cyclin family. Cyclin AB subfamily. As to quaternary structure, interacts with the CDC2 protein kinase to form a serine/threonine kinase holoenzyme complex also known as maturation promoting factor (MPF). The cyclin subunit imparts substrate specificity to the complex.

In terms of biological role, essential for the control of the cell cycle at the G2/M (mitosis) transition. The polypeptide is G2/mitotic-specific cyclin-1 (Medicago sativa subsp. varia (Alfalfa)).